The following is a 284-amino-acid chain: MERDFCEIKLDEPLKYHTSFKIGGPARLFVVPNSIEGLICALSHFPDAKILGRGTNILAPDSGVDVVISTVNLNKCFVDDELIVCESGASLFSVCKKASHNSLSGLEFAYGIPGSVGGAIYMNAGAYGGQICDVVAWVEVYDGEKVMTLDRSQLEFSYRKSIFQRTRWMILKAAFKLKKADMNEINNAMEEIMTRRMESQPMDMPSAGSVFKKPGEDFYVARVIEEIGLKGLRVGDAQISTKHAGFIVNLGEARSSDVLKLIEIIRHRVKEHCGIQLQLEVEIW.

One can recognise an FAD-binding PCMH-type domain in the interval 21–180 (KIGGPARLFV…LKAAFKLKKA (160 aa)). Arg159 is an active-site residue. The active-site Proton donor is the Ser209. Residue Glu280 is part of the active site.

Belongs to the MurB family. FAD is required as a cofactor.

The protein resides in the cytoplasm. The enzyme catalyses UDP-N-acetyl-alpha-D-muramate + NADP(+) = UDP-N-acetyl-3-O-(1-carboxyvinyl)-alpha-D-glucosamine + NADPH + H(+). It functions in the pathway cell wall biogenesis; peptidoglycan biosynthesis. Cell wall formation. The sequence is that of UDP-N-acetylenolpyruvoylglucosamine reductase from Pseudothermotoga lettingae (strain ATCC BAA-301 / DSM 14385 / NBRC 107922 / TMO) (Thermotoga lettingae).